A 156-amino-acid polypeptide reads, in one-letter code: Anaerobic nitrite reductase HB2 (156 aa).

The Globin domain maps to 2-151 (GFTDKQEALV…LASAIKAEMH (150 aa)). The Homodimerization motif lies at 35 to 39 (EIAPV). 4 residues coordinate heme b: S45, K59, H63, and H98. A Homodimerization motif is present at residues 105 to 117 (DPHFEVVKEALLR).

Belongs to the plant globin family. Homodimer. The cofactor is heme b.

It is found in the cytoplasm. The protein localises to the nucleus. It catalyses the reaction Fe(III)-heme b-[protein] + nitric oxide + H2O = Fe(II)-heme b-[protein] + nitrite + 2 H(+). Phytoglobin that reduces nitrite to nitric oxide (NO) under anoxic conditions (e.g. during flooding or in waterlogged soil). May not function as an oxygen storage or transport protein. Has an unusually high affinity for O(2) through an hexacoordinate heme iron because of a very low dissociation constant. In Solanum lycopersicum (Tomato), this protein is Anaerobic nitrite reductase HB2.